The following is a 297-amino-acid chain: Non-structural protein VP10 (297 aa).

In Oryza latifolia (Indian wild rice), this protein is Non-structural protein VP10.